The sequence spans 490 residues: Auxin transporter-like protein 5 (490 aa).

The Cytoplasmic segment spans residues 1 to 55 (MEMANDKVAETVIVGNYVEMESEGKPPQDIKSKLSNFLWHGGSAYDAWFSCASNQ). Residues 56–73 (VAQVLLTLPYSFSQLGML) traverse the membrane as a helical segment. Topologically, residues 74–75 (SG) are extracellular. The chain crosses the membrane as a helical span at residues 76–96 (ILFQLFYGILGSWTAYLISIL). Over 97–132 (YVEYRTRKEREKVNFRSHVIQWFEVLDGLLGKHWRN) the chain is Cytoplasmic. A helical transmembrane segment spans residues 133–153 (VGLGFNCTFLLFGSVIQLIAC). The Extracellular segment spans residues 154–168 (ASNIYYINDNLDKRT). The helical transmembrane segment at 169–189 (WTYIFGACCATTVFIPSFHNY) threads the bilayer. R190 is a topological domain (cytoplasmic). A helical transmembrane segment spans residues 191 to 211 (IWSFLGLVMTTYTAWYLTIAA). Residues 212-227 (VLHGQVEGVKHSGPNK) lie on the Extracellular side of the membrane. The chain crosses the membrane as a helical span at residues 228–248 (IILYFTGATNILYTFGGHAVT). Over 249 to 262 (VEIMHAMWKPQKFK) the chain is Cytoplasmic. The helical transmembrane segment at 263–283 (AIYLLATLYVLTLTIPSATAV) threads the bilayer. Over 284-310 (YWAFGDMLLNHSNAFALLPKSPFRDMA) the chain is Extracellular. Residue N293 is glycosylated (N-linked (GlcNAc...) asparagine). A helical membrane pass occupies residues 311 to 331 (VILMLIHQFITFGFACTPLYF). Topologically, residues 332–352 (VWEKTVGMHECKSLCKRALVR) are cytoplasmic. A helical membrane pass occupies residues 353–373 (LPVVIPIWFLAIIFPFFGPIN). The Extracellular segment spans residues 374-376 (STV). Residues 377 to 397 (GSLLVSFTVYIIPALAHIFTF) form a helical membrane-spanning segment. Over 398 to 420 (KSSSARQNAVEQPPKFVGRWVGT) the chain is Cytoplasmic. Residues 421 to 441 (FVINVFIVVWVLIVGFGFGGW) traverse the membrane as a helical segment. Residues 442-490 (ASMVNFVHQIDTFGLFTKCYQCPPPTPSVPTMPPHQMNATAPSPHHHHH) lie on the Extracellular side of the membrane. The N-linked (GlcNAc...) asparagine glycan is linked to N479.

The protein belongs to the amino acid/polyamine transporter 2 family. Amino acid/auxin permease (AAAP) (TC 2.A.18.1) subfamily. Shoots and roots of nodulating plants, at low levels.

It is found in the cell membrane. In terms of biological role, carrier protein involved in proton-driven auxin influx. Mediates the formation of auxin gradient from developing leaves (site of auxin biosynthesis) to tips by contributing to the loading of auxin in vascular tissues and facilitating acropetal (base to tip) auxin transport within inner tissues of the root apex, and basipetal (tip to base) auxin transport within outer tissues of the root apex. May be involved in lateral roots and nodules formation. The chain is Auxin transporter-like protein 5 (LAX5) from Medicago truncatula (Barrel medic).